A 248-amino-acid chain; its full sequence is MALLEICCYSMECALTAQQNGADRVELCAAPKEGGLTPSLGVLKSVRQRVTIPVHPIIRPRGGDFCYSDGEFAAILEDVRTVRELGFPGLVTGVLEVDGNVDMPRMEKIMAAAGPLAVTFHRAFDMCANPLNTLNNLTELGITRVLTSGQKSDALQGLSKIMELIAHRDAPIIMAGAGVRAENLHHFLDAGVLEVHSSAGAWQASPMRYRNQGLSMSSDAHADEYLRYVVDGAAVAEMKGIIERHQAK.

It belongs to the CutC family. Homodimer.

The protein localises to the cytoplasm. The sequence is that of PF03932 family protein CutC from Escherichia coli O45:K1 (strain S88 / ExPEC).